The sequence spans 421 residues: UDP-N-acetylglucosamine 1-carboxyvinyltransferase (421 aa).

22 to 23 contacts phosphoenolpyruvate; sequence KN. Arginine 93 serves as a coordination point for UDP-N-acetyl-alpha-D-glucosamine. The Proton donor role is filled by cysteine 117. Cysteine 117 carries the 2-(S-cysteinyl)pyruvic acid O-phosphothioketal modification. Residues 122 to 126, aspartate 308, and isoleucine 330 each bind UDP-N-acetyl-alpha-D-glucosamine; that span reads RPVDL.

Belongs to the EPSP synthase family. MurA subfamily.

It is found in the cytoplasm. It carries out the reaction phosphoenolpyruvate + UDP-N-acetyl-alpha-D-glucosamine = UDP-N-acetyl-3-O-(1-carboxyvinyl)-alpha-D-glucosamine + phosphate. It functions in the pathway cell wall biogenesis; peptidoglycan biosynthesis. Functionally, cell wall formation. Adds enolpyruvyl to UDP-N-acetylglucosamine. This chain is UDP-N-acetylglucosamine 1-carboxyvinyltransferase, found in Pseudomonas fluorescens (strain SBW25).